Reading from the N-terminus, the 240-residue chain is Gas vesicle protein C (240 aa).

Residues 1-13 (MALKDKWQQDRIG) show a composition bias toward basic and acidic residues. The segment at 1–20 (MALKDKWQQDRIGRQQGVQE) is disordered. 5 repeats span residues 18–50 (VQER…RQGF), 51–83 (VTGV…LENF), 84–116 (IQQL…LSEF), 117–149 (REDL…LAIF), and 150–207 (RQTL…LQDY). A 5 X 33 AA tandem repeats region spans residues 18–207 (VQERQQQVQT…GVFRAELQDY (190 aa)).

Belongs to the gas vesicle GvpC family.

It localises to the gas vesicle. In terms of biological role, confers stability, involved in shaping gas vesicles, hollow, gas filled proteinaceous nanostructures. During planktonic growth they allow positioning of the organism at a favorable depth for light or nutrient acquisition. The chain is Gas vesicle protein C from Planktothrix agardhii (Oscillatoria agardhii).